A 284-amino-acid chain; its full sequence is Bifunctional protein FolD (284 aa).

Residues 165 to 167 (GRS) and serine 190 contribute to the NADP(+) site.

It belongs to the tetrahydrofolate dehydrogenase/cyclohydrolase family. As to quaternary structure, homodimer.

The enzyme catalyses (6R)-5,10-methylene-5,6,7,8-tetrahydrofolate + NADP(+) = (6R)-5,10-methenyltetrahydrofolate + NADPH. It carries out the reaction (6R)-5,10-methenyltetrahydrofolate + H2O = (6R)-10-formyltetrahydrofolate + H(+). It participates in one-carbon metabolism; tetrahydrofolate interconversion. Catalyzes the oxidation of 5,10-methylenetetrahydrofolate to 5,10-methenyltetrahydrofolate and then the hydrolysis of 5,10-methenyltetrahydrofolate to 10-formyltetrahydrofolate. The protein is Bifunctional protein FolD of Streptococcus sanguinis (strain SK36).